The primary structure comprises 887 residues: MNEKYDPAAIESAAHAQWVAADAYRVDENARDSQGQLKPKFYACSMLPYPSGKLHMGHVRNYTINDMLTRQLRMKGMNVLMPMGWDAFGLPAENAALKNSVPPEKWTRENIATMKGQMLAMGLAIDWSREVATCDPTYYKWNQWLFLKMLEAGIAERRTQVVNWDPVDQTVLANEQVIDGRGWRSGALVEKREIPGYYLNIVKYADELLGAVANPEDPNYLSGWPERVRLMQENWIGKSEGVRFAFPHQIAGADGELIQGGKLYVFTTRADTIMGVTFCAVAPEHPLAAHAAATNPALAAFIAECAHGGTTEAELATQEKKGLPTGLFVTHPLTGAQVEVWVGNYVLMSYGDGAVMGVPAHDERDFAFAKKYGISIRQVVQAEGQTFSLDGWADWYGDKQRAVCVNSGLLDGLPYKEAVSKVAELVGAQGLGEKKTTWRLRDWGISRQRYWGTPIPIIHCDDCGSVPVPEKDLPVVLPIDCVPDGSGNPLKKRTDFLNVACPCCGKPAQRETDTMDTFVDSSWYFMRYCDARNSEQMVAGGTDYWMPMDQYIGGIEHAILHLLYARFWTKVMRDLGLVKVNEPFTKLLTQGMVLNHIYSRRTDKGGIEYFWPHEVENVFDAGGKVTGAKLKSDGSAVDYGGIGTMSKSKNNGVDPQDLINQYGADTARLFVMFASPPEQTLEWNDAGVEGAHRFLKRVWGFGVKQAELLKGATEVGAELSGDAKALRREVHLVLRQVSYDYERMQYNTVVSGSMKLLNALEAYKHDGSAGSAAVLREGYSVLLRGLYPACPHITHHLWSELGYAAKLGDLLDAPWPEVVEAALVQDEIELVLQVNGKTRGSIKVPAAADKAAIEAAAAASAEVAKFADGKPIRKLIVVPGRLVNVVV.

The short motif at 48 to 58 (PYPSGKLHMGH) is the 'HIGH' region element. The short motif at 644–648 (TMSKS) is the 'KMSKS' region element. K647 serves as a coordination point for ATP.

The protein belongs to the class-I aminoacyl-tRNA synthetase family.

The protein resides in the cytoplasm. The catalysed reaction is tRNA(Leu) + L-leucine + ATP = L-leucyl-tRNA(Leu) + AMP + diphosphate. This Leptothrix cholodnii (strain ATCC 51168 / LMG 8142 / SP-6) (Leptothrix discophora (strain SP-6)) protein is Leucine--tRNA ligase.